A 501-amino-acid polypeptide reads, in one-letter code: Protein YLS7 (501 aa).

The chain crosses the membrane as a helical; Signal-anchor for type II membrane protein span at residues 25-45 (IAFAIGGLTSFVIFASLLLFT). The segment at 69 to 131 (HSIHDPDRNP…NVSIDEEATQ (63 aa)) is disordered. Over residues 78 to 89 (PSPVSSSESPPV) the composition is skewed to low complexity. Residues 94–113 (SDDKVLPKGSHDSNDVRLGE) show a composition bias toward basic and acidic residues. The span at 114–124 (ETNSGKSSNVS) shows a compositional bias: polar residues. The short motif at 211 to 213 (GDS) is the GDS motif element. The segment at 438-467 (RHDGHPGPYRSPDPKKITKRGPDGQPPPQD) is disordered. A compositionally biased stretch (basic and acidic residues) spans 449–459 (PDPKKITKRGP). The DCXHWCLPGXXDXWN motif signature appears at 467–481 (DCLHWCMPGPVDTWN).

The protein belongs to the PC-esterase family. TBL subfamily. Expressed in roots, cauline leaves and flowers.

Its subcellular location is the membrane. Functionally, may act as a bridging protein that binds pectin and other cell wall polysaccharides. Probably involved in maintaining esterification of pectins. May be involved in the specific O-acetylation of cell wall polymers. This is Protein YLS7 (YLS7) from Arabidopsis thaliana (Mouse-ear cress).